Reading from the N-terminus, the 399-residue chain is Acetate kinase (399 aa).

Residue asparagine 9 participates in Mg(2+) binding. Lysine 16 contacts ATP. Residue arginine 90 coordinates substrate. The Proton donor/acceptor role is filled by aspartate 147. ATP is bound by residues 207-211 (HLGNG), 281-283 (DFR), and 333-337 (GVGEN). Glutamate 387 contributes to the Mg(2+) binding site.

This sequence belongs to the acetokinase family. In terms of assembly, homodimer. The cofactor is Mg(2+). Mn(2+) is required as a cofactor.

The protein resides in the cytoplasm. The enzyme catalyses acetate + ATP = acetyl phosphate + ADP. It functions in the pathway metabolic intermediate biosynthesis; acetyl-CoA biosynthesis; acetyl-CoA from acetate: step 1/2. In terms of biological role, catalyzes the formation of acetyl phosphate from acetate and ATP. Can also catalyze the reverse reaction. The polypeptide is Acetate kinase (Mycobacterium sp. (strain JLS)).